Consider the following 1078-residue polypeptide: Nonribosomal peptide synthetase aneB (1078 aa).

Residues 20–417 (FQQNVLDRPD…HGRKDTQVKI (398 aa)) are adenylation. The region spanning 559–635 (MPTTPLERQM…TLCQHVSVRP (77 aa)) is the Carrier domain. An O-(pantetheine 4'-phosphoryl)serine modification is found at S596. Positions 699–1013 (NYTLRLDVKL…HEMGYYGPVT (315 aa)) are condensation.

This sequence belongs to the NRP synthetase family.

The catalysed reaction is holo-[peptidyl-carrier protein] + L-proline + ATP = L-prolyl-[peptidyl-carrier protein] + AMP + diphosphate. The protein operates within secondary metabolite biosynthesis. In terms of biological role, nonribosomal peptide synthetase; part of the gene cluster that mediates the biosynthesis of aculenes, a unique type of norsesquiterpenes that contain a nordaucane skeleton linked to an L-proline moiety and are of mixed biosynthetic origin. The pathway begins with the synthesis of dauca-4,7-diene by the terpene cyclase aneC using farnesyl pyrophosphate (FPP) as substrate. The cytochrome P450 monooxygenase aneF then performs the initial oxidation at C-12 of dauca-4,7-diene to yield asperaculane D. Asperaculane D is substrate of the cytochrome P450 monooxygenase aneD for C-10 hydroxylation to yield asperaculane E. The cytochrome P450 monooxygenase aneG then converts asperaculane E into aculene D via C-2 oxidation. The monomodular nonribosomal peptide synthase aneB adenylates L-proline and the thiohydrolase aneE transfers this activated L-proline derivative to aculenes D and C to produce respectively aculenes B and A. The dioxygenase aneA converts aculene D into aculene C, and aculene B into aculene A by introducing the 5,6-alkene moiety. Asperculanes A, B, C and F, as well as 14-prolyl asperculane C, might be shunt products of the pathway. In Aspergillus aculeatus (strain ATCC 16872 / CBS 172.66 / WB 5094), this protein is Nonribosomal peptide synthetase aneB.